The sequence spans 437 residues: Adenylosuccinate synthetase (437 aa).

GTP contacts are provided by residues 12-18 (GDEGKGK) and 40-42 (GHT). The Proton acceptor role is filled by Asp-13. Positions 13 and 40 each coordinate Mg(2+). IMP-binding positions include 13–16 (DEGK), 38–41 (NAGH), Thr-128, Arg-142, Gln-223, Thr-238, and Arg-302. His-41 functions as the Proton donor in the catalytic mechanism. 298-304 (TTTGRRR) lines the substrate pocket. Residues Arg-304, 330–332 (KLD), and 412–414 (SLG) contribute to the GTP site.

This sequence belongs to the adenylosuccinate synthetase family. As to quaternary structure, homodimer. Mg(2+) is required as a cofactor.

The protein resides in the cytoplasm. It carries out the reaction IMP + L-aspartate + GTP = N(6)-(1,2-dicarboxyethyl)-AMP + GDP + phosphate + 2 H(+). It functions in the pathway purine metabolism; AMP biosynthesis via de novo pathway; AMP from IMP: step 1/2. Plays an important role in the de novo pathway of purine nucleotide biosynthesis. Catalyzes the first committed step in the biosynthesis of AMP from IMP. In Prochlorococcus marinus (strain NATL1A), this protein is Adenylosuccinate synthetase.